A 257-amino-acid polypeptide reads, in one-letter code: Probable 6-phosphogluconolactonase (257 aa).

This sequence belongs to the glucosamine/galactosamine-6-phosphate isomerase family. 6-phosphogluconolactonase subfamily.

It carries out the reaction 6-phospho-D-glucono-1,5-lactone + H2O = 6-phospho-D-gluconate + H(+). It functions in the pathway carbohydrate degradation; pentose phosphate pathway; D-ribulose 5-phosphate from D-glucose 6-phosphate (oxidative stage): step 2/3. Its function is as follows. Hydrolysis of 6-phosphogluconolactone to 6-phosphogluconate. This Schizosaccharomyces pombe (strain 972 / ATCC 24843) (Fission yeast) protein is Probable 6-phosphogluconolactonase.